Reading from the N-terminus, the 223-residue chain is UPF0441 protein YgiB (223 aa).

Positions 201 to 223 (ESVAKQSTMQRSAAGTSTRSMGG) are disordered. Residues 204-223 (AKQSTMQRSAAGTSTRSMGG) are compositionally biased toward polar residues.

It belongs to the UPF0441 family.

This Salmonella gallinarum (strain 287/91 / NCTC 13346) protein is UPF0441 protein YgiB.